The primary structure comprises 365 residues: MLKRTPLFPVYARYGAKTVEFGGWEMPVQFSSIKEEHNAVRTRAGLFDVSHMGEIIVRGGGSLPFLQKLMTNDVAKLRPGRVQYTLMCDESAGTVDDLLIYQKGEDDYLLVVNAANTEKDFAWLSEHADGDVELEDVSAETALLALQGPAAERVLQKLTDMDLSALRPFSFQDGVEVASVKTLVSRTGYTGEDGFELYCQAEDAITLWEAILTAGAEDGVLPCGLGARDTLRFEACLPLYGQELSATISPLEAGLGFAVKTEKEPPFIGQAVLKQQKEAGPPRRLVGIEMIDKGIPRHGYRVFAAGEEAGFVTTGTQSPTLKKNIGLALVKAEVAAIGQEVEVDIRGKRLKATIVPTPFYKRAKS.

This sequence belongs to the GcvT family. The glycine cleavage system is composed of four proteins: P, T, L and H.

The enzyme catalyses N(6)-[(R)-S(8)-aminomethyldihydrolipoyl]-L-lysyl-[protein] + (6S)-5,6,7,8-tetrahydrofolate = N(6)-[(R)-dihydrolipoyl]-L-lysyl-[protein] + (6R)-5,10-methylene-5,6,7,8-tetrahydrofolate + NH4(+). Functionally, the glycine cleavage system catalyzes the degradation of glycine. The polypeptide is Aminomethyltransferase (Geobacillus thermodenitrificans (strain NG80-2)).